Here is a 520-residue protein sequence, read N- to C-terminus: Pleckstrin homology domain-containing family O member 1-A (520 aa).

Disordered regions lie at residues 1 to 23 (MKKSHLVKRGLQDANQPSSQPDK), 208 to 296 (SLDK…GHLQ), 313 to 439 (IQEQ…KSTD), and 497 to 520 (QARQRREELSKTGMASQKLQQKSP). Residues 20 to 131 (QPDKVGWIRR…WINVLNTAIT (112 aa)) enclose the PH domain. The span at 227–241 (PASNTEAQEKTSSLP) shows a compositional bias: polar residues. Basic and acidic residues-rich tracts occupy residues 242-255 (RKSEISWSQEDHPR) and 333-347 (DSPRLRHLKGSDSPH). Residues 348–361 (SKGSSSPHSANSPS) are compositionally biased toward low complexity. Basic and acidic residues-rich tracts occupy residues 363–385 (RAKDSPSSKSKESPHAKSKDSPR) and 396–418 (KSIDSPDSKESSSLHMKCIDLTH). Positions 420-439 (KGSQSPLSTGSNSPHMKSTD) are enriched in polar residues. Positions 497-506 (QARQRREELS) are enriched in basic and acidic residues. Residues 509–520 (GMASQKLQQKSP) show a composition bias toward polar residues.

Post-translationally, C-terminal fragments could be released during apoptosis via caspase-3-dependent cleavage.

The protein resides in the membrane. It localises to the nucleus. It is found in the cytoplasm. Plays a role in the regulation of the actin cytoskeleton through its interactions with actin capping protein (CP). This Danio rerio (Zebrafish) protein is Pleckstrin homology domain-containing family O member 1-A (plekho1a).